The following is a 66-amino-acid chain: Large ribosomal subunit protein bL35 (66 aa).

Positions 1 to 42 (MPKQKTHRASAKRFKRTANGGLKRHHAYTGHRFHGKTKKQRR) are disordered.

The protein belongs to the bacterial ribosomal protein bL35 family.

In Lactobacillus gasseri (strain ATCC 33323 / DSM 20243 / BCRC 14619 / CIP 102991 / JCM 1131 / KCTC 3163 / NCIMB 11718 / NCTC 13722 / AM63), this protein is Large ribosomal subunit protein bL35.